A 551-amino-acid polypeptide reads, in one-letter code: Arginine--tRNA ligase (551 aa).

Residues 125–135 carry the 'HIGH' region motif; the sequence is ANPTGPLHIGH.

This sequence belongs to the class-I aminoacyl-tRNA synthetase family. In terms of assembly, monomer.

It localises to the cytoplasm. The enzyme catalyses tRNA(Arg) + L-arginine + ATP = L-arginyl-tRNA(Arg) + AMP + diphosphate. The chain is Arginine--tRNA ligase from Nitratidesulfovibrio vulgaris (strain DP4) (Desulfovibrio vulgaris).